Here is a 93-residue protein sequence, read N- to C-terminus: Co-chaperonin GroES (93 aa).

The protein belongs to the GroES chaperonin family. Heptamer of 7 subunits arranged in a ring. Interacts with the chaperonin GroEL.

It localises to the cytoplasm. Together with the chaperonin GroEL, plays an essential role in assisting protein folding. The GroEL-GroES system forms a nano-cage that allows encapsulation of the non-native substrate proteins and provides a physical environment optimized to promote and accelerate protein folding. GroES binds to the apical surface of the GroEL ring, thereby capping the opening of the GroEL channel. The chain is Co-chaperonin GroES from Geobacillus kaustophilus (strain HTA426).